A 121-amino-acid chain; its full sequence is NAD(P)H-quinone oxidoreductase subunit 3, chloroplastic (121 aa).

3 consecutive transmembrane segments (helical) span residues 10–30 (FWAF…VSNL), 65–85 (MFAL…PWAM), and 90–110 (LGII…IGLI).

Belongs to the complex I subunit 3 family. In terms of assembly, NDH is composed of at least 16 different subunits, 5 of which are encoded in the nucleus.

The protein localises to the plastid. Its subcellular location is the chloroplast thylakoid membrane. The enzyme catalyses a plastoquinone + NADH + (n+1) H(+)(in) = a plastoquinol + NAD(+) + n H(+)(out). It catalyses the reaction a plastoquinone + NADPH + (n+1) H(+)(in) = a plastoquinol + NADP(+) + n H(+)(out). Functionally, NDH shuttles electrons from NAD(P)H:plastoquinone, via FMN and iron-sulfur (Fe-S) centers, to quinones in the photosynthetic chain and possibly in a chloroplast respiratory chain. The immediate electron acceptor for the enzyme in this species is believed to be plastoquinone. Couples the redox reaction to proton translocation, and thus conserves the redox energy in a proton gradient. The chain is NAD(P)H-quinone oxidoreductase subunit 3, chloroplastic from Staurastrum punctulatum (Green alga).